A 93-amino-acid chain; its full sequence is Acylphosphatase (93 aa).

The cysteines at positions 5 and 49 are disulfide-linked. In terms of domain architecture, Acylphosphatase-like spans 5–93; sequence CIIAWVYGRV…ETLTGFSIRY (89 aa). Catalysis depends on residues Arg-20 and Asn-38.

It belongs to the acylphosphatase family.

The enzyme catalyses an acyl phosphate + H2O = a carboxylate + phosphate + H(+). The chain is Acylphosphatase from Salmonella typhi.